Here is a 436-residue protein sequence, read N- to C-terminus: KICSTOR complex protein kaptin (436 aa).

At methionine 1 the chain carries N-acetylmethionine.

In terms of assembly, part of the KICSTOR complex composed of KPTN, ITFG2, KICS2 and SZT2. SZT2 probably serves as a link between the other three proteins in the KICSTOR complex and mediates the direct interaction with the GATOR1 complex. May associate with F-actin filaments.

Its subcellular location is the lysosome membrane. It localises to the cell projection. The protein localises to the lamellipodium. It is found in the stereocilium. Functionally, as part of the KICSTOR complex functions in the amino acid-sensing branch of the TORC1 signaling pathway. Recruits, in an amino acid-independent manner, the GATOR1 complex to the lysosomal membranes and allows its interaction with GATOR2 and the RAG GTPases. Functions upstream of the RAG GTPases and is required to negatively regulate mTORC1 signaling in absence of amino acids. In absence of the KICSTOR complex mTORC1 is constitutively localized to the lysosome and activated. The KICSTOR complex is also probably involved in the regulation of mTORC1 by glucose. The protein is KICSTOR complex protein kaptin of Homo sapiens (Human).